We begin with the raw amino-acid sequence, 635 residues long: Cell pattern formation-associated protein stuA (635 aa).

Disordered regions lie at residues 1-21 (MNQTQPYMDVHSSHLSSAQPY) and 63-82 (SGVASSQTAPPPPSTSMSSQ). An HTH APSES-type domain is found at 129 to 235 (RVTATLWEDE…HNIGGLLYHP (107 aa)). Residues 163-184 (GTKLLNVAGMTRGRRDGILKSE) constitute a DNA-binding region (H-T-H motif). 2 disordered regions span residues 246 to 480 (QESQ…ASRS) and 498 to 635 (SQLT…PRRR). Low complexity-rich tracts occupy residues 276–294 (MQTSIPSQMPQPPTMSSQP) and 312–325 (SASSLMGLSNQSSS). The segment covering 326 to 355 (YDWNNQGMNSGVPNTQPLSIDTTLSNTRSM) has biased composition (polar residues). The span at 356–380 (PTTPATTPPGNNLQGMQSYQSQSGY) shows a compositional bias: low complexity. A compositionally biased stretch (basic and acidic residues) spans 460–469 (APEHESEYVQ). 2 stretches are compositionally biased toward polar residues: residues 498 to 513 (SQLTNDITGSPQQNGS) and 539 to 571 (AASSLYNIVSDTRGSSNGAGSENYTVASNTAPT). The interval 582 to 605 (KRGREDDDMGRPDSQGDYESKRRR) is nuclear localization domain. Residues 583-592 (RGREDDDMGR) show a composition bias toward basic and acidic residues.

The protein belongs to the EFG1/PHD1/stuA family.

In terms of biological role, transcription factor that regulates asexual reproduction. Binds the StuA-response elements (StRE) with the consensus sequence 5'-(A/T)CGCG(T/A)N(A/C)-3' at the promoters of target genes. Controls the expression of 6 secondary metabolite biosynthetic clusters including 2 involved in the synthesis of alkaloids (fumigaclavine and fumitremorgen), 2 clusters of the ETP class (gliotoxin and an unknown ETP-like toxin), a cluster predicted to produce pseurotin A, and the product of the last cluster is unknown. Controls the production of ergot alkaloids during conidiophore development. Controls expression of sspA and gliP. Involved in the induction of immunoglobulin E-independent mast cell degranulation. The sequence is that of Cell pattern formation-associated protein stuA from Aspergillus fumigatus (strain ATCC MYA-4609 / CBS 101355 / FGSC A1100 / Af293) (Neosartorya fumigata).